The sequence spans 470 residues: Serine--tRNA ligase (470 aa).

272-274 (TAE) serves as a coordination point for L-serine. 303–305 (RAE) is an ATP binding site. E326 serves as a coordination point for L-serine. ATP is bound at residue 393–396 (EISS). S428 is an L-serine binding site.

It belongs to the class-II aminoacyl-tRNA synthetase family. Type-1 seryl-tRNA synthetase subfamily. In terms of assembly, homodimer. The tRNA molecule binds across the dimer.

Its subcellular location is the cytoplasm. It catalyses the reaction tRNA(Ser) + L-serine + ATP = L-seryl-tRNA(Ser) + AMP + diphosphate + H(+). It carries out the reaction tRNA(Sec) + L-serine + ATP = L-seryl-tRNA(Sec) + AMP + diphosphate + H(+). The protein operates within aminoacyl-tRNA biosynthesis; selenocysteinyl-tRNA(Sec) biosynthesis; L-seryl-tRNA(Sec) from L-serine and tRNA(Sec): step 1/1. Its function is as follows. Catalyzes the attachment of serine to tRNA(Ser). Is also able to aminoacylate tRNA(Sec) with serine, to form the misacylated tRNA L-seryl-tRNA(Sec), which will be further converted into selenocysteinyl-tRNA(Sec). The chain is Serine--tRNA ligase from Nitrobacter hamburgensis (strain DSM 10229 / NCIMB 13809 / X14).